The sequence spans 76 residues: Dermaseptin-H1 (76 aa).

The first 22 residues, methionine 1–cysteine 22, serve as a signal peptide directing secretion. A propeptide spanning residues glutamate 23 to arginine 45 is cleaved from the precursor. Positions glutamate 25–lysine 44 are disordered. The segment covering glutamate 30–serine 41 has biased composition (acidic residues). Position 73 is a glutamine amide (glutamine 73). The propeptide occupies glutamate 75–glutamine 76.

Expressed by the skin glands.

The protein localises to the secreted. Its function is as follows. Has antimicrobial activity. The polypeptide is Dermaseptin-H1 (Pithecopus hypochondrialis (Orange-legged leaf frog)).